We begin with the raw amino-acid sequence, 456 residues long: Protein disulfide-isomerase TMX3 (456 aa).

A signal peptide spans 1–29 (MANAVGRRSWAALRLCAAVILLDLAVCKG). One can recognise a Thioredoxin domain in the interval 30–131 (FVEDLNESFK…KDDIIEFAHR (102 aa)). Residues 30–378 (FVEDLNESFK…TIVSIFKSSP (349 aa)) are Lumenal-facing. The N-linked (GlcNAc...) asparagine glycan is linked to Asn35. Residues Cys56 and Cys59 each act as nucleophile in the active site. The cysteines at positions 56 and 59 are disulfide-linked. Asn261 and Asn316 each carry an N-linked (GlcNAc...) asparagine glycan. Residues 379–399 (LMGCFLFGLPLGVISIMCYGI) form a helical membrane-spanning segment. Residues 400-456 (YTADTDGGYIEERYEVSKSEMENQEQIEESKEQESSSGGSLAPTVQEPKDVLEKKKD) are Cytoplasmic-facing. The disordered stretch occupies residues 416–456 (SKSEMENQEQIEESKEQESSSGGSLAPTVQEPKDVLEKKKD). Basic and acidic residues predominate over residues 446–456 (EPKDVLEKKKD). A Di-lysine motif motif is present at residues 453-456 (KKKD).

The protein belongs to the protein disulfide isomerase family.

It is found in the endoplasmic reticulum membrane. It carries out the reaction Catalyzes the rearrangement of -S-S- bonds in proteins.. In terms of biological role, probable disulfide isomerase, which participates in the folding of proteins containing disulfide bonds. May act as a dithiol oxidase. Acts as a regulator of endoplasmic reticulum-mitochondria contact sites via its ability to regulate redox signals. The protein is Protein disulfide-isomerase TMX3 (Tmx3) of Mus musculus (Mouse).